We begin with the raw amino-acid sequence, 114 residues long: Endoribonuclease MazF2 (114 aa).

The protein belongs to the PemK/MazF family. As to quaternary structure, probably forms a complex with cognate antitoxin MazE2.

Toxic component of a type II toxin-antitoxin (TA) system. Acts as an endoribonuclease on single-strand RNA, cleaving between the second and third bases in the sequences CUCCU and UUCCU. Neutralized by coexpression with cognate antitoxin MazE2. This Mycobacterium bovis (strain ATCC BAA-935 / AF2122/97) protein is Endoribonuclease MazF2 (mazF2).